The following is a 447-amino-acid chain: Exodeoxyribonuclease 7 large subunit (447 aa).

It belongs to the XseA family. Heterooligomer composed of large and small subunits.

Its subcellular location is the cytoplasm. It catalyses the reaction Exonucleolytic cleavage in either 5'- to 3'- or 3'- to 5'-direction to yield nucleoside 5'-phosphates.. Bidirectionally degrades single-stranded DNA into large acid-insoluble oligonucleotides, which are then degraded further into small acid-soluble oligonucleotides. The chain is Exodeoxyribonuclease 7 large subunit from Pediococcus pentosaceus (strain ATCC 25745 / CCUG 21536 / LMG 10740 / 183-1w).